The primary structure comprises 454 residues: Bifunctional protein GlmU (454 aa).

The tract at residues 1 to 232 (MTDRTCLSIV…VDNVIGINNR (232 aa)) is pyrophosphorylase. UDP-N-acetyl-alpha-D-glucosamine is bound by residues 11–14 (LAAG), Lys25, Gln78, and 83–84 (GT). Asp108 is a binding site for Mg(2+). UDP-N-acetyl-alpha-D-glucosamine-binding residues include Gly144, Glu158, Asn173, and Asn230. Asn230 serves as a coordination point for Mg(2+). Residues 233 to 253 (AELAEAETIWQNRKRRELMLS) form a linker region. The interval 254-454 (GVTLIAPETV…AIKAAKSVSK (201 aa)) is N-acetyltransferase. The UDP-N-acetyl-alpha-D-glucosamine site is built by Arg319 and Lys337. Residue His349 is the Proton acceptor of the active site. The UDP-N-acetyl-alpha-D-glucosamine site is built by Tyr352 and Asn363. Residues Ala366, 372 to 373 (NY), Ser391, Ser409, and Arg426 each bind acetyl-CoA.

This sequence in the N-terminal section; belongs to the N-acetylglucosamine-1-phosphate uridyltransferase family. The protein in the C-terminal section; belongs to the transferase hexapeptide repeat family. As to quaternary structure, homotrimer. Mg(2+) is required as a cofactor.

Its subcellular location is the cytoplasm. The enzyme catalyses alpha-D-glucosamine 1-phosphate + acetyl-CoA = N-acetyl-alpha-D-glucosamine 1-phosphate + CoA + H(+). It carries out the reaction N-acetyl-alpha-D-glucosamine 1-phosphate + UTP + H(+) = UDP-N-acetyl-alpha-D-glucosamine + diphosphate. It participates in nucleotide-sugar biosynthesis; UDP-N-acetyl-alpha-D-glucosamine biosynthesis; N-acetyl-alpha-D-glucosamine 1-phosphate from alpha-D-glucosamine 6-phosphate (route II): step 2/2. It functions in the pathway nucleotide-sugar biosynthesis; UDP-N-acetyl-alpha-D-glucosamine biosynthesis; UDP-N-acetyl-alpha-D-glucosamine from N-acetyl-alpha-D-glucosamine 1-phosphate: step 1/1. Its pathway is bacterial outer membrane biogenesis; LPS lipid A biosynthesis. Its function is as follows. Catalyzes the last two sequential reactions in the de novo biosynthetic pathway for UDP-N-acetylglucosamine (UDP-GlcNAc). The C-terminal domain catalyzes the transfer of acetyl group from acetyl coenzyme A to glucosamine-1-phosphate (GlcN-1-P) to produce N-acetylglucosamine-1-phosphate (GlcNAc-1-P), which is converted into UDP-GlcNAc by the transfer of uridine 5-monophosphate (from uridine 5-triphosphate), a reaction catalyzed by the N-terminal domain. The polypeptide is Bifunctional protein GlmU (Brucella melitensis biotype 1 (strain ATCC 23456 / CCUG 17765 / NCTC 10094 / 16M)).